The primary structure comprises 301 residues: uncharacterized protein (301 aa).

This sequence belongs to the asfivirus E301R family. As to quaternary structure, interacts with host IRF3.

In terms of biological role, plays a role in the inhibition of host innate immune system by acting as a negatively regulator of type I interferon production. Mechanistically, interacts with and prevents host IRF3 nuclear localization to inhibit its transcriptional activity. This is an uncharacterized protein from African swine fever virus (isolate Pig/Kenya/KEN-50/1950) (ASFV).